The following is a 694-amino-acid chain: Type VI secretion system spike protein VgrG2 (694 aa).

The protein belongs to the VgrG protein family.

The protein resides in the secreted. Part of the type VI secretion system specialized secretion system, which delivers several virulence factors in both prokaryotic and eukaryotic cells during infection. Forms the spike at the tip of the elongating tube formed by haemolysin co-regulated protein Hcp. Allows the delivery of the VasX antibacterial toxin to target cells where it exerts its toxicity. This chain is Type VI secretion system spike protein VgrG2 (vgrG2), found in Vibrio cholerae serotype O1 (strain ATCC 39315 / El Tor Inaba N16961).